A 268-amino-acid chain; its full sequence is tRNA pseudouridine synthase A (268 aa).

Residue D52 is the Nucleophile of the active site. Y110 contributes to the substrate binding site.

This sequence belongs to the tRNA pseudouridine synthase TruA family. In terms of assembly, homodimer.

It carries out the reaction uridine(38/39/40) in tRNA = pseudouridine(38/39/40) in tRNA. Formation of pseudouridine at positions 38, 39 and 40 in the anticodon stem and loop of transfer RNAs. The chain is tRNA pseudouridine synthase A from Prochlorococcus marinus (strain MIT 9515).